We begin with the raw amino-acid sequence, 491 residues long: Argininosuccinate lyase (491 aa).

This sequence belongs to the lyase 1 family. Argininosuccinate lyase subfamily.

The protein resides in the cytoplasm. It carries out the reaction 2-(N(omega)-L-arginino)succinate = fumarate + L-arginine. Its pathway is amino-acid biosynthesis; L-arginine biosynthesis; L-arginine from L-ornithine and carbamoyl phosphate: step 3/3. This is Argininosuccinate lyase from Methanococcoides burtonii (strain DSM 6242 / NBRC 107633 / OCM 468 / ACE-M).